A 219-amino-acid chain; its full sequence is MATKITGVFILILTITFSSSSAVTATQQAPSSSPPVLTCTEELVMFSPCLPYVSSPPNNMSETPDPICCSVFTSSVHSSTGNCLCYLLRQPMILGFPLDRSRLISLSQICTDQNSEESFESLCSVSESPELPPLQSIQFTNPFVSGNNVSASPQSVDLAPEVSPSSDLFSPETATLAPPPPPPPLPVLQYFSSDSLKIRNFWFPSTIIMTFATSILARI.

Positions 1–22 are cleaved as a signal peptide; it reads MATKITGVFILILTITFSSSSA. Intrachain disulfides connect Cys-39–Cys-85, Cys-49–Cys-68, Cys-69–Cys-110, and Cys-83–Cys-123. Asn-59 is a glycosylation site (N-linked (GlcNAc...) asparagine). Asn-148 is a glycosylation site (N-linked (GlcNAc...) asparagine). The disordered stretch occupies residues 152–181; the sequence is SPQSVDLAPEVSPSSDLFSPETATLAPPPP. Ser-192 carries the GPI-anchor amidated serine lipid modification. Residues 193 to 219 constitute a propeptide, removed in mature form; sequence SDSLKIRNFWFPSTIIMTFATSILARI.

The protein belongs to the plant LTP family.

Its subcellular location is the cell membrane. In terms of biological role, probable lipid transfer protein. The sequence is that of Non-specific lipid transfer protein GPI-anchored 25 from Arabidopsis thaliana (Mouse-ear cress).